The sequence spans 244 residues: Haloacid dehalogenase-like hydrolase domain-containing protein 3 (244 aa).

Belongs to the HAD-like hydrolase superfamily.

This chain is Haloacid dehalogenase-like hydrolase domain-containing protein 3 (hdhd3), found in Xenopus laevis (African clawed frog).